A 70-amino-acid chain; its full sequence is MEKLTILLLVAAVLTSTQALIQGGADERQKAKINFLSRSDRECRGYNAPCSAGAPCCSWWTCSTQTSRCF.

The first 19 residues, 1-19 (MEKLTILLLVAAVLTSTQA), serve as a signal peptide directing secretion. Residues 20–40 (LIQGGADERQKAKINFLSRSD) constitute a propeptide that is removed on maturation. Cystine bridges form between cysteine 43–cysteine 57, cysteine 50–cysteine 62, and cysteine 56–cysteine 69.

It belongs to the conotoxin O2 superfamily. As to expression, expressed by the venom duct.

The protein localises to the secreted. Its function is as follows. Inhibits voltage-gated ion channels. This Conus victoriae (Queen Victoria cone) protein is Conotoxin Vc6.10.